We begin with the raw amino-acid sequence, 761 residues long: 3'-5' RNA nuclease TATDN2 (761 aa).

Disordered stretches follow at residues 1–90, 135–181, 197–294, 318–337, 343–364, and 388–486; these read MASE…HFLG, CSLK…LRDQ, KSMP…RRTV, KDRE…SDVE, RFSQ…SSFT, and SSPK…PKSH. 2 stretches are compositionally biased toward low complexity: residues 33-52 and 66-85; these read APSS…PSSP and SRRL…SSFS. Residues 247 to 294 are compositionally biased toward basic and acidic residues; it reads QKEKDATPEVSMEEDKTVPERSSFYDRRVVIDPQEKPSEEPLGDRRTV. Over residues 388-402 the composition is skewed to low complexity; sequence SSPKPSSYPSTGSSS. Over residues 417–431 the composition is skewed to polar residues; it reads SDYSPNSTGSVQNTS. Basic and acidic residues predominate over residues 452-470; that stretch reads RSSEEREVKEKRTFQEEMP. The a divalent metal cation site is built by His-499, His-501, Glu-593, His-630, His-655, and Asp-707.

This sequence belongs to the metallo-dependent hydrolases superfamily. TatD-type hydrolase family. Mg(2+) serves as cofactor.

The protein localises to the nucleus. Functionally, mg(2+)-dependent 3'RNA exonuclease and endonuclease that resolves R-loops via specific degradation of R-loop RNA stucture. Shows no activity against D-loop and minimal activity against the RNA strand of an RNA-DNA hybrid duplex oligomer. Has no 3' or 5' exonuclease activity, no uracil glycosylase activity, and no 5' flap endonuclease activity on DNA substrates. May have a role in maintaining genomic stability through its role in R-loop resolution. This is 3'-5' RNA nuclease TATDN2 (TATDN2) from Homo sapiens (Human).